The following is a 599-amino-acid chain: Elongation factor 4 (599 aa).

In terms of domain architecture, tr-type G spans 4–186 (KFIRNFSIIA…AIIKHVPPPL (183 aa)). GTP contacts are provided by residues 16–21 (DHGKST) and 133–136 (NKID).

It belongs to the TRAFAC class translation factor GTPase superfamily. Classic translation factor GTPase family. LepA subfamily.

The protein resides in the cell membrane. The catalysed reaction is GTP + H2O = GDP + phosphate + H(+). Required for accurate and efficient protein synthesis under certain stress conditions. May act as a fidelity factor of the translation reaction, by catalyzing a one-codon backward translocation of tRNAs on improperly translocated ribosomes. Back-translocation proceeds from a post-translocation (POST) complex to a pre-translocation (PRE) complex, thus giving elongation factor G a second chance to translocate the tRNAs correctly. Binds to ribosomes in a GTP-dependent manner. The sequence is that of Elongation factor 4 from Ureaplasma urealyticum serovar 10 (strain ATCC 33699 / Western).